Here is a 951-residue protein sequence, read N- to C-terminus: Cation channel sperm-associated auxiliary subunit epsilon (951 aa).

Positions 1 to 19 are cleaved as a signal peptide; that stretch reads MSAREVAVLLLWLSCYGSA. The Extracellular segment spans residues 20–903; the sequence is LWRYSTNSPN…ETFGLIPSPS (884 aa). Cystine bridges form between Cys57-Cys71, Cys101-Cys206, Cys246-Cys336, and Cys410-Cys413. 2 N-linked (GlcNAc...) asparagine glycosylation sites follow: Asn61 and Asn114. 5 N-linked (GlcNAc...) asparagine glycosylation sites follow: Asn414, Asn472, Asn487, Asn493, and Asn535. 4 disulfides stabilise this stretch: Cys583–Cys690, Cys703–Cys885, Cys719–Cys752, and Cys804–Cys835. Asn796 carries an N-linked (GlcNAc...) asparagine glycan. Asn854, Asn881, and Asn886 each carry an N-linked (GlcNAc...) asparagine glycan. The helical transmembrane segment at 904–924 threads the bilayer; sequence VYLVASFLFVLMLLFFTILVL. At 925–951 the chain is on the cytoplasmic side; that stretch reads SYFRYMRIYRRYIYEPLHKPQRKRKKN.

It belongs to the CATSPERD family. As to quaternary structure, component of the CatSper complex or CatSpermasome composed of the core pore-forming members CATSPER1, CATSPER2, CATSPER3 and CATSPER4 as well as auxiliary members CATSPERB, CATSPERG, CATSPERD, CATSPERE, CATSPERZ, C2CD6/CATSPERT, TMEM249, TMEM262 and EFCAB9. HSPA1 may be an additional auxiliary complex member. The core complex members CATSPER1, CATSPER2, CATSPER3 and CATSPER4 form a heterotetrameric channel. The auxiliary CATSPERB, CATSPERG, CATSPERD and CATSPERE subunits form a pavilion-like structure over the pore which stabilizes the complex through interactions with CATSPER4, CATSPER3, CATSPER1 and CATSPER2 respectively. TMEM262/CATSPERH interacts with CATSPERB, further stabilizing the complex. C2CD6/CATSPERT interacts at least with CATSPERD and is required for targeting the CatSper complex in the flagellar membrane.

It is found in the cell projection. It localises to the cilium. The protein localises to the flagellum membrane. Its function is as follows. Auxiliary component of the CatSper complex, a complex involved in sperm cell hyperactivation. Sperm cell hyperactivation is needed for sperm motility which is essential late in the preparation of sperm for fertilization. The protein is Cation channel sperm-associated auxiliary subunit epsilon of Homo sapiens (Human).